The primary structure comprises 98 residues: Small ribosomal subunit protein eS24 (98 aa).

This sequence belongs to the eukaryotic ribosomal protein eS24 family.

The chain is Small ribosomal subunit protein eS24 from Thermococcus gammatolerans (strain DSM 15229 / JCM 11827 / EJ3).